Reading from the N-terminus, the 1252-residue chain is Guanine nucleotide exchange factor SDC25 (1252 aa).

One can recognise an SH3 domain in the interval Q26–N97. 2 disordered regions span residues I409–W454 and L623–E648. Low complexity predominate over residues T416–S428. In terms of domain architecture, N-terminal Ras-GEF spans S782 to K914. In terms of domain architecture, Ras-GEF spans D952 to K1199. The segment at R1201–K1252 is disordered. Over residues S1214–S1236 the composition is skewed to basic and acidic residues. A compositionally biased stretch (basic residues) spans Q1239 to K1252.

Promotes the exchange of Ras-bound GDP by GTP. The protein is Guanine nucleotide exchange factor SDC25 (SDC25) of Saccharomyces cerevisiae (strain YJM789) (Baker's yeast).